A 464-amino-acid polypeptide reads, in one-letter code: Zinc transporter 6-A (464 aa).

Residues 1 to 33 (MGTIYLFRKTQRSLLGKLAQEFRLVTADRRSWK) are Cytoplasmic-facing. Residues 34–54 (ILLFGAINVVCTAFLLTWCSS) form a helical membrane-spanning segment. The Extracellular portion of the chain corresponds to 55–64 (TNSMALTAYT). Residues 65 to 85 (YLTIFDLFSLITSLISYWVTM) form a helical membrane-spanning segment. The Cytoplasmic segment spans residues 86–98 (KKPSPTYSFGFER). Residues 99–119 (FEVLAVFASTVLAQLGALFIL) form a helical membrane-spanning segment. The Extracellular portion of the chain corresponds to 120–134 (KESAERFIEQPEIHT). Residues 135–155 (GRLLVGTFVALFFNLFTMLSI) traverse the membrane as a helical segment. Topologically, residues 156-200 (RNKPFAYVSDAASTSWLQEHVADLSRSLCGIIPGLSSIFLPRMNP) are cytoplasmic. A helical transmembrane segment spans residues 201-221 (FVLIDIAGALALCITYMLIEI). The Extracellular portion of the chain corresponds to 222 to 223 (NN). Residues 224–244 (YFAVDTASAVAIAVMTFGTMY) traverse the membrane as a helical segment. At 245–464 (PMSVYSGKVL…TPGQFTQFRQ (220 aa)) the chain is on the cytoplasmic side.

It belongs to the cation diffusion facilitator (CDF) transporter (TC 2.A.4) family. SLC30A subfamily. As to quaternary structure, heterodimer with SLC30A5; form a functional zinc ion transmembrane transporter.

It localises to the golgi apparatus. Its subcellular location is the trans-Golgi network membrane. In terms of biological role, has probably no intrinsic transporter activity but together with SLC30A5 forms a functional zinc ion:proton antiporter heterodimer, mediating zinc entry into the lumen of organelles along the secretory pathway. As part of that zinc ion:proton antiporter, contributes to zinc ion homeostasis within the early secretory pathway and regulates the activation and folding of enzymes like alkaline phosphatases and enzymes involved in phosphatidylinositol glycan anchor biosynthesis. This Xenopus laevis (African clawed frog) protein is Zinc transporter 6-A (slc30a6-a).